The primary structure comprises 347 residues: Heat-inducible transcription repressor HrcA (347 aa).

This sequence belongs to the HrcA family.

Functionally, negative regulator of class I heat shock genes (grpE-dnaK-dnaJ and groELS operons). Prevents heat-shock induction of these operons. The sequence is that of Heat-inducible transcription repressor HrcA from Rhodococcus erythropolis (strain PR4 / NBRC 100887).